The sequence spans 717 residues: Copine family protein 5 (717 aa).

A C2 domain is found at 193–318; that stretch reads YLGGIIVSAE…KYGPGSDNVY (126 aa). One can recognise a VWFA domain in the interval 377 to 567; it reads ELDQRRFDGE…LNKSRIAETA (191 aa).

The protein belongs to the copine family.

This chain is Copine family protein 5 (cpna-5), found in Caenorhabditis elegans.